The primary structure comprises 392 residues: Acetyl-CoA acetyltransferase (392 aa).

The active-site Acyl-thioester intermediate is the Cys-85. CoA contacts are provided by Cys-206, Ser-207, Val-209, and Lys-332. His-336 acts as the Proton acceptor in catalysis.

It belongs to the thiolase-like superfamily. Thiolase family. As to quaternary structure, interacts with HMG-CoA synthase (HMGCS) that catalyzes the second step in the pathway and with a DUF35 protein. The acetoacetyl-CoA thiolase/HMG-CoA synthase complex channels the intermediate via a fused CoA-binding site, which allows for efficient coupling of the endergonic thiolase reaction with the exergonic HMGCS reaction.

The enzyme catalyses 2 acetyl-CoA = acetoacetyl-CoA + CoA. It functions in the pathway metabolic intermediate biosynthesis; (R)-mevalonate biosynthesis; (R)-mevalonate from acetyl-CoA: step 1/3. In terms of biological role, catalyzes the condensation of two acetyl-coA molecules into acetoacetyl-CoA. Functions in the mevalonate (MVA) pathway leading to isopentenyl diphosphate (IPP), a key precursor for the biosynthesis of isoprenoid compounds that are building blocks of archaeal membrane lipids. The chain is Acetyl-CoA acetyltransferase from Methanothermococcus thermolithotrophicus (Methanococcus thermolithotrophicus).